Consider the following 450-residue polypeptide: Saccharopine dehydrogenase [NADP(+), L-glutamate-forming] (450 aa).

Residues 11–14 (SGFV), 33–35 (CRT), 55–56 (DV), isoleucine 76, 98–99 (TS), 125–127 (LDP), and serine 175 each bind NADP(+). L-saccharopine is bound by residues 99 to 100 (SY) and aspartate 126. Residues arginine 224 and 245–247 (TLR) contribute to the L-saccharopine site.

It belongs to the saccharopine dehydrogenase family. Homodimer.

The enzyme catalyses L-saccharopine + NADP(+) + H2O = (S)-2-amino-6-oxohexanoate + L-glutamate + NADPH + H(+). Its pathway is amino-acid biosynthesis; L-lysine biosynthesis via AAA pathway; L-lysine from L-alpha-aminoadipate (fungal route): step 2/3. The protein is Saccharopine dehydrogenase [NADP(+), L-glutamate-forming] (LYS3) of Pyricularia oryzae (strain 70-15 / ATCC MYA-4617 / FGSC 8958) (Rice blast fungus).